The chain runs to 427 residues: Trigger factor (427 aa).

In terms of domain architecture, PPIase FKBP-type spans 163 to 248 (GDTVVIDFVG…VHEVKAKEVP (86 aa)).

The protein belongs to the FKBP-type PPIase family. Tig subfamily.

The protein resides in the cytoplasm. The catalysed reaction is [protein]-peptidylproline (omega=180) = [protein]-peptidylproline (omega=0). Its function is as follows. Involved in protein export. Acts as a chaperone by maintaining the newly synthesized protein in an open conformation. Functions as a peptidyl-prolyl cis-trans isomerase. This Streptococcus equi subsp. equi (strain 4047) protein is Trigger factor.